We begin with the raw amino-acid sequence, 839 residues long: LPS-assembly protein LptD (839 aa).

The first 21 residues, 1–21, serve as a signal peptide directing secretion; that stretch reads MAIGITACVLSLINYQGLAYS.

It belongs to the LptD family. In terms of assembly, component of the lipopolysaccharide transport and assembly complex. Interacts with LptE and LptA.

The protein resides in the cell outer membrane. Functionally, together with LptE, is involved in the assembly of lipopolysaccharide (LPS) at the surface of the outer membrane. This is LPS-assembly protein LptD from Legionella pneumophila (strain Lens).